Reading from the N-terminus, the 429-residue chain is Choline kinase A2 (429 aa).

ATP is bound by residues 82–88 (KGGMSNM), arginine 111, 152–158 (EYIPSRP), and glutamine 257. 84–86 (GMS) provides a ligand contact to substrate. Glutamate 258 is a binding site for Ca(2+). Aspartate 301 contacts ATP. Residues glutamate 320 and isoleucine 323 each coordinate Ca(2+).

Belongs to the choline/ethanolamine kinase family. As to quaternary structure, homodimer. A small proportion exists as higher oligomers. The cofactor is Mg(2+).

It catalyses the reaction choline + ATP = phosphocholine + ADP + H(+). It carries out the reaction ethanolamine + ATP = phosphoethanolamine + ADP + H(+). It participates in phospholipid metabolism; phosphatidylcholine biosynthesis; phosphocholine from choline: step 1/1. Its pathway is phospholipid metabolism; phosphatidylethanolamine biosynthesis; phosphatidylethanolamine from ethanolamine: step 1/3. Its activity is regulated as follows. Inhibited by Ca(2+). Mild inhibition by high levels of Mg(2+)(&gt;10 mM). Functionally, catalyzes the first step in phosphatidylcholine biosynthesis. May contribute to phosphatidylethanolamine biosynthesis. Phosphorylates choline and ethanolamine but the activity is much higher with choline. This chain is Choline kinase A2, found in Caenorhabditis elegans.